A 104-amino-acid chain; its full sequence is Increased recombination centers protein 13 (104 aa).

A helical transmembrane segment spans residues 63–83 (LVHLFSYVFFLFLLKICVDVL).

It localises to the membrane. Its function is as follows. May be involved in a pathway contributing to genomic integrity. In Saccharomyces cerevisiae (strain ATCC 204508 / S288c) (Baker's yeast), this protein is Increased recombination centers protein 13 (IRC13).